Reading from the N-terminus, the 475-residue chain is Aspartyl/glutamyl-tRNA(Asn/Gln) amidotransferase subunit B (475 aa).

Belongs to the GatB/GatE family. GatB subfamily. Heterotrimer of A, B and C subunits.

The enzyme catalyses L-glutamyl-tRNA(Gln) + L-glutamine + ATP + H2O = L-glutaminyl-tRNA(Gln) + L-glutamate + ADP + phosphate + H(+). It carries out the reaction L-aspartyl-tRNA(Asn) + L-glutamine + ATP + H2O = L-asparaginyl-tRNA(Asn) + L-glutamate + ADP + phosphate + 2 H(+). Functionally, allows the formation of correctly charged Asn-tRNA(Asn) or Gln-tRNA(Gln) through the transamidation of misacylated Asp-tRNA(Asn) or Glu-tRNA(Gln) in organisms which lack either or both of asparaginyl-tRNA or glutaminyl-tRNA synthetases. The reaction takes place in the presence of glutamine and ATP through an activated phospho-Asp-tRNA(Asn) or phospho-Glu-tRNA(Gln). In Bacillus cereus (strain ZK / E33L), this protein is Aspartyl/glutamyl-tRNA(Asn/Gln) amidotransferase subunit B.